A 1927-amino-acid polypeptide reads, in one-letter code: Integrin beta-like protein A (1927 aa).

Residues 1-20 (MNRILTLFILFISLFIVCEA) form the signal peptide. The Extracellular segment spans residues 21–1860 (THFRFGTMSW…KENNNKTVLT (1840 aa)). The N-linked (GlcNAc...) asparagine glycan is linked to Asn309. The region spanning 425-462 (YGEKCDPVDPCVNGESNEGSQGNGKCTCYYGWEGKNCD) is the EGF-like domain. 2 cysteine pairs are disulfide-bonded: Cys435–Cys450 and Cys452–Cys461. The VWFA domain occupies 522 to 709 (EVLVLVDSQP…VLSKAVVKAI (188 aa)). Asn1122, Asn1516, Asn1717, Asn1723, and Asn1855 each carry an N-linked (GlcNAc...) asparagine glycan. The chain crosses the membrane as a helical span at residues 1861-1881 (GAIAGAAAGAGLLAAGAWFLL). Over 1882 to 1927 (KKSAPPTDAFFGEGAFADGAVSTNPMYEESGRSAINPLYEASSENL) the chain is Cytoplasmic.

This sequence belongs to the SIB family. As to quaternary structure, interacts with talA/talin.

It is found in the membrane. Functionally, implicated in cellular adhesion to substrate or phagocytic particles. This is Integrin beta-like protein A (sibA) from Dictyostelium discoideum (Social amoeba).